A 368-amino-acid polypeptide reads, in one-letter code: MTGNADSGKIATEKDPRKLVFTKLEVSPVFRESPVKELPLFPPISREHSEAKDKTDEEGITSRKHKGCRCKQSKCLKLYCDCFASGVVCTDCDCVDCHNNSEKCDAREAAMVNVLGRNPNAFSEKALGSLTDNQCKAAPDTKPGLLSRGCKCKRTRCLKKYCECFQANLLCSDNCKCINCKNVSEAFQPPAFSAHNSPQVYRRRRDRELTEWNSCPAPLFSIPDNSIQNALGSPMSCSPKLPYRKKRSLMGYTSTLLPDLGDLCSLLVAASESATTTAEDQNRIFTKPDDKEAIELSSESESRNVEEEIQSRGRLIELIDVQYNGEEDSQCKTKTSVNETDIYMEQERAVLETFRDCLQKFIKSRLES.

The CRC domain maps to 64–185 (KHKGCRCKQS…KCINCKNVSE (122 aa)).

The protein belongs to the lin-54 family.

It localises to the nucleus. In terms of biological role, plays a role in development of both male and female reproductive tissues. In Arabidopsis thaliana (Mouse-ear cress), this protein is Protein tesmin/TSO1-like CXC 8 (TCX8).